The following is a 354-amino-acid chain: MRARPQVCEALLFALALHTGVCYGIKWLALSKTPAALALNQTQHCKQLEGLVSAQVQLCRSNLELMRTIVHAARGAMKACRRAFADMRWNCSSIELAPNYLLDLERGTRESAFVYALSAATISHTIARACTSGDLPGCSCGPVPGEPPGPGNRWGGCADNLSYGLLMGAKFSDAPMKVKKTGSQANKLMRLHNSEVGRQALRASLETKCKCHGVSGSCSIRTCWKGLQELQDVAADLKTRYLSATKVVHRPMGTRKHLVPKDLDIRPVKDSELVYLQSSPDFCMKNEKVGSHGTQDRQCNKTSNGSDSCDLMCCGRGYNPYTDRVVERCHCKYHWCCYVTCRRCERTVERYVCK.

The first 24 residues, 1–24 (MRARPQVCEALLFALALHTGVCYG), serve as a signal peptide directing secretion. 2 N-linked (GlcNAc...) asparagine glycosylation sites follow: Asn-40 and Asn-90. Disulfide bonds link Cys-80–Cys-91, Cys-130–Cys-138, and Cys-140–Cys-157. N-linked (GlcNAc...) asparagine glycosylation occurs at Asn-160. Cystine bridges form between Cys-209-Cys-223, Cys-211-Cys-218, Cys-283-Cys-314, Cys-299-Cys-309, Cys-313-Cys-353, Cys-329-Cys-344, Cys-331-Cys-341, and Cys-336-Cys-337. Ser-215 is lipidated: O-palmitoleoyl serine; by PORCN. N-linked (GlcNAc...) asparagine glycans are attached at residues Asn-300 and Asn-304.

The protein belongs to the Wnt family. In terms of processing, palmitoleoylation is required for efficient binding to frizzled receptors. Depalmitoleoylation leads to Wnt signaling pathway inhibition.

It is found in the secreted. Its subcellular location is the extracellular space. It localises to the extracellular matrix. Its function is as follows. Ligand for members of the frizzled family of seven transmembrane receptors. Probable developmental protein. May be a signaling molecule which affects the development of discrete regions of tissues. Is likely to signal over only few cell diameters. This Mus musculus (Mouse) protein is Protein Wnt-11 (Wnt11).